Here is a 199-residue protein sequence, read N- to C-terminus: uncharacterized protein (199 aa).

A helical transmembrane segment spans residues 17–37; that stretch reads AGAVTLGIGFFALASALWFLI.

It localises to the membrane. This is an uncharacterized protein from Homo sapiens (Human).